Reading from the N-terminus, the 262-residue chain is MQYKTKAKKSLGQNFLQDENIIRKIVQLANIKKHDIVIEIGPGLGALTRYLLSSSNNVSVVEFDASVIDTLIANCQKYGTPHIYNQDFLKFDISSLENSSNQKIKLIGNLPYNISSPILFKVIKDSDKIVDAHFMLQKEVVERIVSLPNSKSYGRLSVILQYHFDCSMILKIPPEVFYPQPKVDSAILRLKPKNSKELLKNYNFFEEIVKQSFAQRRKTLHNNLKSILKERKIDPSTLPVDTNLRAENLSVGDFVSLANFLS.

S-adenosyl-L-methionine contacts are provided by asparagine 14, leucine 16, glycine 41, glutamate 62, aspartate 87, and asparagine 109.

It belongs to the class I-like SAM-binding methyltransferase superfamily. rRNA adenine N(6)-methyltransferase family. RsmA subfamily.

The protein resides in the cytoplasm. It carries out the reaction adenosine(1518)/adenosine(1519) in 16S rRNA + 4 S-adenosyl-L-methionine = N(6)-dimethyladenosine(1518)/N(6)-dimethyladenosine(1519) in 16S rRNA + 4 S-adenosyl-L-homocysteine + 4 H(+). Its function is as follows. Specifically dimethylates two adjacent adenosines (A1518 and A1519) in the loop of a conserved hairpin near the 3'-end of 16S rRNA in the 30S particle. May play a critical role in biogenesis of 30S subunits. The sequence is that of Ribosomal RNA small subunit methyltransferase A from Francisella tularensis subsp. novicida (strain U112).